The primary structure comprises 64 residues: Conotoxin Ca5.3 (64 aa).

The first 22 residues, 1–22, serve as a signal peptide directing secretion; the sequence is MRCVPVFIILLLLIASAPGVDA. Positions 23-48 are excised as a propeptide; that stretch reads QPKTKYNAPLTSLHDNAKGILQEHWN. An Isoleucine amide modification is found at Ile-61.

The protein belongs to the conotoxin T superfamily. Post-translationally, contains 2 disulfide bonds that can be either 'C1-C3, C2-C4' or 'C1-C4, C2-C3', since these disulfide connectivities have been observed for conotoxins with cysteine framework V (for examples, see AC P0DQQ7 and AC P81755). As to expression, expressed by the venom duct.

The protein localises to the secreted. The polypeptide is Conotoxin Ca5.3 (Conus caracteristicus (Characteristic cone)).